Consider the following 756-residue polypeptide: Serine/threonine-protein kinase DCLK1 (756 aa).

A phosphoserine mark is found at serine 32 and serine 36. The residue at position 46 (threonine 46) is a Phosphothreonine. Doublecortin domains lie at 57–143 (KKVR…LEYT) and 186–269 (KLVT…QDDF). The segment at 288-393 (ASASRRGTTK…QRGWRREESE (106 aa)) is disordered. A compositionally biased stretch (low complexity) spans 297-313 (KSPGPSRRSKSPASTSS). Phosphoserine occurs at positions 305, 307, 330, 332, 334, 337, 347, 352, 353, 355, 358, 362, and 364. Positions 347-364 (SQHGGSSTSLSSTKVCSS) are enriched in low complexity. Acidic residues predominate over residues 366 to 375 (DENDGPGEGD). The residue at position 392 (serine 392) is a Phosphoserine. The Protein kinase domain maps to 406–663 (YKVGRTIGDG…AVQVLEHPWV (258 aa)). Residues 412-420 (IGDGNFAVV) and lysine 435 contribute to the ATP site. Residue aspartate 527 is the Proton acceptor of the active site. Position 536 is a phosphotyrosine (tyrosine 536). Positions 711–723 (QVFRRRRNQDVRS) are enriched in basic and acidic residues. The segment at 711 to 756 (QVFRRRRNQDVRSRYKAQPAPPELNSESEDYSPSSSETVRSPNSPF) is disordered. Serine 742, serine 751, and serine 754 each carry phosphoserine.

This sequence belongs to the protein kinase superfamily. CAMK Ser/Thr protein kinase family. CaMK subfamily.

It carries out the reaction L-seryl-[protein] + ATP = O-phospho-L-seryl-[protein] + ADP + H(+). The enzyme catalyses L-threonyl-[protein] + ATP = O-phospho-L-threonyl-[protein] + ADP + H(+). Functionally, probable kinase that may be involved in a calcium-signaling pathway controlling neuronal migration in the developing brain. May also participate in functions of the mature nervous system. In Mus musculus (Mouse), this protein is Serine/threonine-protein kinase DCLK1 (Dclk1).